We begin with the raw amino-acid sequence, 303 residues long: Nucleotide-binding protein SAB0719 (303 aa).

Residue 18 to 25 coordinates ATP; it reads GLSGAGKS. 69–72 contributes to the GTP binding site; the sequence is DLRG.

It belongs to the RapZ-like family.

In terms of biological role, displays ATPase and GTPase activities. This Staphylococcus aureus (strain bovine RF122 / ET3-1) protein is Nucleotide-binding protein SAB0719.